Reading from the N-terminus, the 429-residue chain is Glutamate-1-semialdehyde 2,1-aminomutase (429 aa).

An N6-(pyridoxal phosphate)lysine modification is found at Lys265.

It belongs to the class-III pyridoxal-phosphate-dependent aminotransferase family. HemL subfamily. Homodimer. The cofactor is pyridoxal 5'-phosphate.

The protein resides in the cytoplasm. It catalyses the reaction (S)-4-amino-5-oxopentanoate = 5-aminolevulinate. It functions in the pathway porphyrin-containing compound metabolism; protoporphyrin-IX biosynthesis; 5-aminolevulinate from L-glutamyl-tRNA(Glu): step 2/2. The chain is Glutamate-1-semialdehyde 2,1-aminomutase from Legionella pneumophila subsp. pneumophila (strain Philadelphia 1 / ATCC 33152 / DSM 7513).